Reading from the N-terminus, the 288-residue chain is Bifunctional protein FolD (288 aa).

NADP(+)-binding positions include 166–168 (GRS), S191, and I232.

It belongs to the tetrahydrofolate dehydrogenase/cyclohydrolase family. In terms of assembly, homodimer.

It carries out the reaction (6R)-5,10-methylene-5,6,7,8-tetrahydrofolate + NADP(+) = (6R)-5,10-methenyltetrahydrofolate + NADPH. The catalysed reaction is (6R)-5,10-methenyltetrahydrofolate + H2O = (6R)-10-formyltetrahydrofolate + H(+). Its pathway is one-carbon metabolism; tetrahydrofolate interconversion. Catalyzes the oxidation of 5,10-methylenetetrahydrofolate to 5,10-methenyltetrahydrofolate and then the hydrolysis of 5,10-methenyltetrahydrofolate to 10-formyltetrahydrofolate. This is Bifunctional protein FolD from Rickettsia canadensis (strain McKiel).